Reading from the N-terminus, the 218-residue chain is MDTNFWLERWQLGHTGFHQQEVLPLLQKHWHALDLPKEARVLVPLCGKTLDMHWLAAQGHRVLGVELSPLAVTQFFDEAGLQPQRHSSAAGEHFIAGPIEIICGDAFALDASALADCTAVYDRAALVALPAELRQHYLQTVYAPLPTHCHGLLITLEYPQAEKAGPPFSVDATHVHALFDSAWQVDQLEHRDILDQEPRFRDEGVTGLSTAVYRLQGR.

Residues Trp10, Leu45, Glu66, and Arg123 each coordinate S-adenosyl-L-methionine.

This sequence belongs to the class I-like SAM-binding methyltransferase superfamily. TPMT family.

It localises to the cytoplasm. The catalysed reaction is S-adenosyl-L-methionine + a thiopurine = S-adenosyl-L-homocysteine + a thiopurine S-methylether.. In Xanthomonas euvesicatoria pv. vesicatoria (strain 85-10) (Xanthomonas campestris pv. vesicatoria), this protein is Thiopurine S-methyltransferase.